Here is a 689-residue protein sequence, read N- to C-terminus: Protein SDA1 homolog (689 aa).

Disordered regions lie at residues 227 to 260 (DEKK…TKNK), 485 to 512 (EQEK…DGEW), and 623 to 689 (TDRK…RLMK). A coiled-coil region spans residues 258–319 (KNKKKLDKAM…RFEVKLMHMD (62 aa)). The span at 492 to 512 (PEEDDGWESASLSDDDEDGEW) shows a compositional bias: acidic residues. The segment covering 670–681 (RDKQIALRDSLL) has biased composition (basic and acidic residues).

This sequence belongs to the SDA1 family.

The protein localises to the nucleus. The protein resides in the nucleolus. In terms of biological role, required for 60S pre-ribosomal subunits export to the cytoplasm. The sequence is that of Protein SDA1 homolog (sdad1) from Xenopus laevis (African clawed frog).